A 1330-amino-acid chain; its full sequence is MAEPRRVAFISLSPVRRREADFAGAEREPPRLEPQPYREPARAEPAPRADAQPPARDKPLPQREVSRAEPPMALQREPPRPEPPPPPLPLQTPPPRESASRAEPPPRPPKETVRLELVLKDPTDESCVEFSYPELLLCGEQRKKLVHTEDPFTDEHKERQEVEMLAKKFEMKYGGKARKHRKDRLQDLIDIGFGYDETDPFIDNSEAYDELVPASLTTKYGGFYINTGTLQFRQASDTEEDDFTDNQKHKPPKVPKIKDDDIEAKKRKRKEEGEKEKKPRKKVPKQLGVVALNSHKSEKKKKRYKDSLSLAAMIRKFQKEKDALKKESTPKVPVIPSTSSLPKPPCAATTLGDDIPDLSLNSADPDLPIFVSTNEHELFQEAENALEMLDDFDFDRLLDATSDGSPLSESGGENGNTTQPTFASQVVPKVVPTLPDGLPVLLEKRIEDLRVAAKLFDEEGRKKFFTQDMNNILLDIELQLQELGPVIRSGVYSHLEAFVPCNKETLVKRLKKLHLNVQDDRLREPLQKLKLAVSNVMPEQLFKYQEDCQARSQAKCAKLQADEEREKNGSDDDDDEKPGKRVIGPRKKFHWDDTIRTLLCNLVEIKLGCYELEPNKSQSAEDYLKSFMETEVKPLWPKGWMQARMLFKESRSVHNHLTSAPAKKKVIPASKPKVKEVMVKTLPVRSFPTMLKECSPKKDPKAPASVVASGGCPCTSSSTSIVASASSSSTPAQETICLDDSLDEDLSLPSASLDLVSEALAVINNGNKGPSVSSRLNVPTTKPRPGLREEKLASIMSKLPLATPKKLDSPQTAHSSSLIAGHTGPVPKKPQDLAHTGISSGLIAGSSIQNPKVSLEPLPARLLQQGLQRSSQIHASSSQTHVSSSQAQAAASSHALGTSEAQDASSLTQVTKVHQHSAVQQNYVSPLQATISKSQTNPVVKLSNNPQLSCSSQLLKTSEKPLMYRLPLSTPSPGNGSQGSHPLVSRTAPSTTTSSNYLAKAMVSQISTQGFKSPFSMAASPKLAASPKPATSPKPLTSPKPSVSPKPSLSAKPSVSTKLISKSNPTPKPAVCPSSSSPNTLVAQSSHSTSNNPAHKQPSGMNISRQSPTLNLLPSNRTSGLPTTKTLQAPSKLTNSSSAGTVGKNSLSGIPVNVPASRGSNLNSSGANRTSLSGGTGSGTQGATKPLSTPHRPTSASGSSVVTASVQSTAGASLLANASPLTLMTSPLSVTNQTVTPFGMLGGLVPVTMPFQFPLELLGFGTDTAGVTATSGSTSAALHHGLTQNLLKSLQPGTQHAATLPHSPLPTHLQQAFNDGGQSKGDTKLPRKPQ.

A disordered region spans residues 1–113 (MAEPRRVAFI…PPPRPPKETV (113 aa)). At S13 the chain carries Phosphoserine. 2 stretches are compositionally biased toward basic and acidic residues: residues 16 to 31 (RRRE…EPPR) and 55 to 67 (ARDK…EVSR). The span at 81–96 (PEPPPPPLPLQTPPPR) shows a compositional bias: pro residues. Phosphothreonine is present on T229. A Phosphoserine modification is found at S236. 2 disordered regions span residues 236-304 (SDTE…KKRY) and 322-345 (DALK…PKPP). At T238 the chain carries Phosphothreonine. A Glycyl lysine isopeptide (Lys-Gly) (interchain with G-Cter in SUMO2) cross-link involves residue K258. S297 is modified (phosphoserine). Phosphoserine is present on residues S402, S405, S408, and S570. Disordered stretches follow at residues 559–583 (LQAD…KRVI), 767–789 (NKGP…GLRE), 801–835 (LATP…DLAH), 866–909 (GLQR…SLTQ), 964–991 (YRLP…APST), 1021–1202 (PKLA…SSVV), and 1292–1330 (PGTQ…RKPQ). Residues 560–570 (QADEEREKNGS) are compositionally biased toward basic and acidic residues. Polar residues-rich tracts occupy residues 767–780 (NKGP…NVPT) and 809–818 (SPQTAHSSSL). The span at 866 to 895 (GLQRSSQIHASSSQTHVSSSQAQAAASSHA) shows a compositional bias: low complexity. 2 stretches are compositionally biased toward polar residues: residues 899 to 909 (SEAQDASSLTQ) and 969 to 980 (STPSPGNGSQGS). A compositionally biased stretch (pro residues) spans 1030–1044 (ATSPKPLTSPKPSVS). The segment covering 1045–1056 (PKPSLSAKPSVS) has biased composition (low complexity). An N6-acetyllysine modification is found at K1052. Composition is skewed to polar residues over residues 1073–1148 (PSSS…NSLS), 1158–1169 (RGSNLNSSGANR), and 1308–1317 (HLQQAFNDGG). Phosphoserine is present on S1107. An N6-acetyllysine modification is found at K1132. Basic and acidic residues predominate over residues 1321 to 1330 (GDTKLPRKPQ).

It belongs to the ubinuclein family.

The protein is Ubinuclein-2 (Ubn2) of Rattus norvegicus (Rat).